Here is a 156-residue protein sequence, read N- to C-terminus: uncharacterized protein (156 aa).

2 consecutive transmembrane segments (helical) span residues 46–66 (GLVL…AGVV) and 114–134 (IIDI…IVAL).

It localises to the cell membrane. This is an uncharacterized protein from Haemophilus influenzae (strain ATCC 51907 / DSM 11121 / KW20 / Rd).